The chain runs to 209 residues: Glycine cleavage system H-like protein gcvH4 (209 aa).

A compositionally biased stretch (low complexity) spans 35–51; it reads NNNNNNNNNNNNNNNNN. The segment at 35-56 is disordered; the sequence is NNNNNNNNNNNNNNNNNRNKKL. The Lipoyl-binding domain occupies 73-159; the sequence is FATIGITNYV…KTTTTTTKIK (87 aa).

It belongs to the GcvH family.

This is Glycine cleavage system H-like protein gcvH4 (gcvH4) from Dictyostelium discoideum (Social amoeba).